The primary structure comprises 195 residues: ATP-dependent Clp protease proteolytic subunit (195 aa).

The Nucleophile role is filled by serine 99. Histidine 124 is a catalytic residue.

The protein belongs to the peptidase S14 family. Fourteen ClpP subunits assemble into 2 heptameric rings which stack back to back to give a disk-like structure with a central cavity, resembling the structure of eukaryotic proteasomes.

The protein localises to the cytoplasm. It catalyses the reaction Hydrolysis of proteins to small peptides in the presence of ATP and magnesium. alpha-casein is the usual test substrate. In the absence of ATP, only oligopeptides shorter than five residues are hydrolyzed (such as succinyl-Leu-Tyr-|-NHMec, and Leu-Tyr-Leu-|-Tyr-Trp, in which cleavage of the -Tyr-|-Leu- and -Tyr-|-Trp bonds also occurs).. Functionally, cleaves peptides in various proteins in a process that requires ATP hydrolysis. Has a chymotrypsin-like activity. Plays a major role in the degradation of misfolded proteins. The polypeptide is ATP-dependent Clp protease proteolytic subunit (Coxiella burnetii (strain CbuG_Q212) (Coxiella burnetii (strain Q212))).